The chain runs to 234 residues: Leucyl/phenylalanyl-tRNA--protein transferase (234 aa).

Belongs to the L/F-transferase family.

The protein resides in the cytoplasm. The enzyme catalyses N-terminal L-lysyl-[protein] + L-leucyl-tRNA(Leu) = N-terminal L-leucyl-L-lysyl-[protein] + tRNA(Leu) + H(+). It carries out the reaction N-terminal L-arginyl-[protein] + L-leucyl-tRNA(Leu) = N-terminal L-leucyl-L-arginyl-[protein] + tRNA(Leu) + H(+). It catalyses the reaction L-phenylalanyl-tRNA(Phe) + an N-terminal L-alpha-aminoacyl-[protein] = an N-terminal L-phenylalanyl-L-alpha-aminoacyl-[protein] + tRNA(Phe). Functions in the N-end rule pathway of protein degradation where it conjugates Leu, Phe and, less efficiently, Met from aminoacyl-tRNAs to the N-termini of proteins containing an N-terminal arginine or lysine. This Escherichia coli O7:K1 (strain IAI39 / ExPEC) protein is Leucyl/phenylalanyl-tRNA--protein transferase.